The sequence spans 341 residues: tRNA N6-adenosine threonylcarbamoyltransferase (341 aa).

Fe cation is bound by residues His120 and His124. Residues 142–146 (VVSGG), Asp175, Gly188, Asp192, and Asn281 each bind substrate. A Fe cation-binding site is contributed by Asp310.

The protein belongs to the KAE1 / TsaD family. Requires Fe(2+) as cofactor.

It localises to the cytoplasm. The enzyme catalyses L-threonylcarbamoyladenylate + adenosine(37) in tRNA = N(6)-L-threonylcarbamoyladenosine(37) in tRNA + AMP + H(+). Its function is as follows. Required for the formation of a threonylcarbamoyl group on adenosine at position 37 (t(6)A37) in tRNAs that read codons beginning with adenine. Is involved in the transfer of the threonylcarbamoyl moiety of threonylcarbamoyl-AMP (TC-AMP) to the N6 group of A37, together with TsaE and TsaB. TsaD likely plays a direct catalytic role in this reaction. The protein is tRNA N6-adenosine threonylcarbamoyltransferase of Anoxybacillus flavithermus (strain DSM 21510 / WK1).